We begin with the raw amino-acid sequence, 150 residues long: Transcription antitermination protein NusB (150 aa).

This sequence belongs to the NusB family.

Involved in transcription antitermination. Required for transcription of ribosomal RNA (rRNA) genes. Binds specifically to the boxA antiterminator sequence of the ribosomal RNA (rrn) operons. This is Transcription antitermination protein NusB from Streptococcus pyogenes serotype M6 (strain ATCC BAA-946 / MGAS10394).